An 806-amino-acid chain; its full sequence is ATP-dependent RNA helicase DBP7 (806 aa).

The interval 24 to 135 is disordered; it reads KGGRWRDRLK…AEPAKASNAP (112 aa). Residues 46 to 56 show a composition bias toward polar residues; it reads PSSTPPRNRTT. Over residues 69–78 the composition is skewed to basic and acidic residues; sequence PRTEDGESHR. Over residues 100–113 the composition is skewed to polar residues; sequence GQISSSLFTSNPSA. The Q motif motif lies at 141 to 170; that stretch reads ENFHSLGVSRRVAQHLATKLEMKAPTAIQK. The region spanning 174–380 is the Helicase ATP-binding domain; that stretch reads PQLINGDSDA…EISLEDAIHI (207 aa). ATP is bound at residue 187 to 194; it reads AETGSGKT. The DEAD box signature appears at 309–312; that stretch reads DEGD. Residues 413 to 611 form the Helicase C-terminal domain; it reads RLVTLIALLK…GLASVVNLPS (199 aa). 2 disordered regions span residues 642–677 and 741–784; these read PAGADDDADDNPNPFRGNKGNHNNNTKPKSKQYKPK and TAAN…VDED. Gly residues predominate over residues 755–768; it reads SGGGGGGGRVGFGR.

It belongs to the DEAD box helicase family. DDX31/DBP7 subfamily.

It localises to the nucleus. It is found in the nucleolus. The catalysed reaction is ATP + H2O = ADP + phosphate + H(+). In terms of biological role, ATP-binding RNA helicase involved in the biogenesis of 60S ribosomal subunits and is required for the normal formation of 25S and 5.8S rRNAs. This chain is ATP-dependent RNA helicase DBP7 (DBP7), found in Chaetomium globosum (strain ATCC 6205 / CBS 148.51 / DSM 1962 / NBRC 6347 / NRRL 1970) (Soil fungus).